A 303-amino-acid polypeptide reads, in one-letter code: Probable aspartoacylase (303 aa).

The Zn(2+) site is built by His13 and Glu16. Substrate-binding positions include Arg55 and 62–63 (NR). Position 104 (His104) interacts with Zn(2+). 2 residues coordinate substrate: Glu162 and Tyr273.

The protein belongs to the AspA/AstE family. Aspartoacylase subfamily. The cofactor is Zn(2+).

It carries out the reaction an N-acyl-L-aspartate + H2O = a carboxylate + L-aspartate. This Parasynechococcus marenigrum (strain WH8102) protein is Probable aspartoacylase.